The primary structure comprises 271 residues: Probable ribosomal RNA small subunit methyltransferase A (271 aa).

Residues histidine 19, leucine 21, glycine 46, glutamate 67, aspartate 92, and asparagine 107 each contribute to the S-adenosyl-L-methionine site.

The protein belongs to the class I-like SAM-binding methyltransferase superfamily. rRNA adenine N(6)-methyltransferase family. RsmA subfamily.

The protein resides in the cytoplasm. Functionally, specifically dimethylates two adjacent adenosines in the loop of a conserved hairpin near the 3'-end of 16S rRNA in the 30S particle. May play a critical role in biogenesis of 30S subunits. This Methanosarcina mazei (strain ATCC BAA-159 / DSM 3647 / Goe1 / Go1 / JCM 11833 / OCM 88) (Methanosarcina frisia) protein is Probable ribosomal RNA small subunit methyltransferase A.